Here is an 81-residue protein sequence, read N- to C-terminus: Small cysteine-rich protein 1 1 (81 aa).

The N-terminal stretch at 1 to 19 (MGVHFNICLLLLLVATISS) is a signal peptide. Residues 20–39 (QTLKATEKDDSTDENPFGIY) constitute a propeptide that is removed on maturation.

It belongs to the Cnidaria small cysteine-rich protein (SCRiP) family. alpha subfamily. Post-translationally, the basic myotoxic domain of rattlesnake crotamine toxins (with 6 Cys residues) has been detected in this protein. However, this protein contains 2 additional Cys at the C-terminal region. Hence, this protein may contain 4 disulfide bonds instead of the 3 suggested by the myotoxin domain.

It is found in the secreted. It localises to the nematocyst. Functionally, induces neurotoxic symptoms on zebrafish. Has also been claimed to be implied in calcification, but tests on homolog proteins suggest that proteins of this family have a neurotoxic function and not a calcification function. In Montipora capitata (Rice coral), this protein is Small cysteine-rich protein 1 1.